We begin with the raw amino-acid sequence, 483 residues long: Probable apyrase 3 (483 aa).

Residues 1-29 (MTPETDALKVQILPKHQSLPYTVTKAKSK) are Cytoplasmic-facing. Residues 30–50 (SLILLVVVSVTITLGLLLYVF) form a helical; Signal-anchor for type II membrane protein membrane-spanning segment. Residues 51-483 (NSNSVISSGS…NGKSRKYLGF (433 aa)) lie on the Extracellular side of the membrane. 72–82 (VLIDAGSSGTR) provides a ligand contact to ATP. Glu195 (proton acceptor) is an active-site residue. An ATP-binding site is contributed by 219–229 (GIVELGGASAQ). 4 N-linked (GlcNAc...) asparagine glycosylation sites follow: Asn250, Asn281, Asn305, and Asn326.

Belongs to the GDA1/CD39 NTPase family. Ca(2+) is required as a cofactor. Expressed in the initiation zone of lateral root and in the lateral root tip, the adaxial junction of lateral shoots with the stems, and in the abscission zone of flower organs. Not expressed in the rosette leaves.

It localises to the membrane. It carries out the reaction a ribonucleoside 5'-triphosphate + 2 H2O = a ribonucleoside 5'-phosphate + 2 phosphate + 2 H(+). In terms of biological role, catalyzes the hydrolysis of phosphoanhydride bonds of nucleoside tri- and di-phosphates. The sequence is that of Probable apyrase 3 (APY3) from Arabidopsis thaliana (Mouse-ear cress).